A 355-amino-acid chain; its full sequence is MKEQLKPLLEDKTYLRHFWHPVCTLNEFERANASGHGPMGVTLLGEKLVLARLNSKIIAAADRCAHRSAQLSIGRVCSNAGKDYLECPYHGWRYDEAGACQLIPACPDKSISPRAKISSFDCEVKYDIVWVRLDNSFDCTQIPYLSDFDNPDMQVIVADSYIWETVAERRWENFTDFSHFAFVHPGTLYDPFFASHPTVYVNRVDGELQFKLAPPREMKGIPPEAPMGDFTYRCTMPYSVNLEIKLWKDDSRFVLWTTASPVDNKSCRNFMIIVREKDNQPDHMHLAFQKRVLDEDQPVIESQWPLEIQTSEVSVATDKISVQFRKWHKELSLSAVEGREAFRDSVLTNVIEEEQ.

The region spanning 19–131 (WHPVCTLNEF…CEVKYDIVWV (113 aa)) is the Rieske domain. [2Fe-2S] cluster contacts are provided by Cys64, His66, Cys87, and His90.

The cofactor is [2Fe-2S] cluster.

It carries out the reaction theobromine + NADH + O2 + H(+) = 7-methylxanthine + formaldehyde + NAD(+) + H2O. It catalyses the reaction theobromine + NADPH + O2 + H(+) = 7-methylxanthine + formaldehyde + NADP(+) + H2O. The enzyme catalyses 3-methylxanthine + NADH + O2 + H(+) = xanthine + formaldehyde + NAD(+) + H2O. The catalysed reaction is 3-methylxanthine + NADPH + O2 + H(+) = xanthine + formaldehyde + NADP(+) + H2O. Functionally, involved in the caffeine degradation, which is the essential first step for assimilating the carbon and nitrogen in caffeine. Catalyzes the N3-demethylation of theobromine to produce 7-methylxanthine and formaldehyde. Also catalyzes the N3-demethylation of 3-methylxanthine, caffeine, and theophylline to xanthine, paraxanthine, and 1-methylxanthine, respectively. NADH is the preferred substrate. The polypeptide is Methylxanthine N3-demethylase NdmB (ndmB) (Pseudomonas putida (Arthrobacter siderocapsulatus)).